Reading from the N-terminus, the 368-residue chain is Peptide chain release factor 2 (368 aa).

An N5-methylglutamine modification is found at glutamine 250.

The protein belongs to the prokaryotic/mitochondrial release factor family. Methylated by PrmC. Methylation increases the termination efficiency of RF2.

It is found in the cytoplasm. Peptide chain release factor 2 directs the termination of translation in response to the peptide chain termination codons UGA and UAA. This chain is Peptide chain release factor 2, found in Mycolicibacterium smegmatis (strain ATCC 700084 / mc(2)155) (Mycobacterium smegmatis).